The primary structure comprises 382 residues: Glutamyl-tRNA reductase (382 aa).

Substrate contacts are provided by residues 38–41, Ser-85, 90–92, and Gln-96; these read TCNR and ENQ. Cys-39 acts as the Nucleophile in catalysis. 164–169 is a binding site for NADP(+); that stretch reads GAGEIG.

Belongs to the glutamyl-tRNA reductase family. As to quaternary structure, homodimer.

It catalyses the reaction (S)-4-amino-5-oxopentanoate + tRNA(Glu) + NADP(+) = L-glutamyl-tRNA(Glu) + NADPH + H(+). It functions in the pathway porphyrin-containing compound metabolism; protoporphyrin-IX biosynthesis; 5-aminolevulinate from L-glutamyl-tRNA(Glu): step 1/2. In terms of biological role, catalyzes the NADPH-dependent reduction of glutamyl-tRNA(Glu) to glutamate 1-semialdehyde (GSA). This chain is Glutamyl-tRNA reductase, found in Methanococcus maripaludis (strain DSM 14266 / JCM 13030 / NBRC 101832 / S2 / LL).